Here is a 60-residue protein sequence, read N- to C-terminus: Large ribosomal subunit protein bL32 (60 aa).

Positions methionine 1–phenylalanine 47 are disordered. Positions arginine 7 to arginine 16 are enriched in basic residues.

The protein belongs to the bacterial ribosomal protein bL32 family.

The protein is Large ribosomal subunit protein bL32 of Teredinibacter turnerae (strain ATCC 39867 / T7901).